Here is a 493-residue protein sequence, read N- to C-terminus: Neuronal pentraxin receptor (493 aa).

The Cytoplasmic portion of the chain corresponds to 1–2 (MK). Residues 3–23 (FLAVLLAAGMLAFLGAVICII) form a helical; Signal-anchor for type II membrane protein membrane-spanning segment. Topologically, residues 24-493 (ASVPLAASPA…FDVCKGRAKA (470 aa)) are extracellular. The tract at residues 37–72 (PGGTDNASAASAAGGSGPQRSLSALHSAGGSAGPSV) is disordered. N42 carries N-linked (GlcNAc...) asparagine glycosylation. Residues 57–72 (SLSALHSAGGSAGPSV) are compositionally biased toward low complexity. N211 carries N-linked (GlcNAc...) asparagine glycosylation. The 203-residue stretch at 285 to 487 (DAFKVSIPIR…GAKKAAFDVC (203 aa)) folds into the Pentraxin (PTX) domain. A disulfide bridge connects residues C315 and C376. Ca(2+)-binding residues include N340, E418, Q419, D420, and Q430. An N-linked (GlcNAc...) asparagine glycan is attached at N456.

As to quaternary structure, heteropentamer with NPTX1 and/or NPTX2. Also binds taipoxin-associated calcium-binding protein 49 (TCBP49/RCN2). Interacts with KLHL2. The cofactor is Ca(2+). Ubiquitinated by a cullin-RING-based BCR (BTB-CUL3-RBX1) E3 ubiquitin-protein ligase complex containing KLHL2.

Its subcellular location is the membrane. Its function is as follows. May be involved in mediating uptake of synaptic material during synapse remodeling or in mediating the synaptic clustering of AMPA glutamate receptors at a subset of excitatory synapses. In Mus musculus (Mouse), this protein is Neuronal pentraxin receptor (Nptxr).